A 105-amino-acid chain; its full sequence is Urease subunit beta (105 aa).

It belongs to the urease beta subunit family. In terms of assembly, heterotrimer of UreA (gamma), UreB (beta) and UreC (alpha) subunits. Three heterotrimers associate to form the active enzyme.

It is found in the cytoplasm. It carries out the reaction urea + 2 H2O + H(+) = hydrogencarbonate + 2 NH4(+). It participates in nitrogen metabolism; urea degradation; CO(2) and NH(3) from urea (urease route): step 1/1. This is Urease subunit beta from Marinobacter nauticus (strain ATCC 700491 / DSM 11845 / VT8) (Marinobacter aquaeolei).